Here is a 615-residue protein sequence, read N- to C-terminus: Ras association domain-containing protein 1 homolog (615 aa).

Disordered regions lie at residues 1 to 29 (MLRS…PTYQ) and 69 to 89 (SDDE…QSIG). Residues 76–87 (TSSTSSPQSEQS) are compositionally biased toward low complexity. Residues 164–214 (NHSFKTHSLLHPTWCDKCGDFIWGILKEALKCEHCNYTCHARCRDLVTLDC) form a Phorbol-ester/DAG-type zinc finger. The interval 249 to 268 (PAMSSSTGSDKENGNGNSAG) is disordered. Polar residues predominate over residues 251–268 (MSSSTGSDKENGNGNSAG). The 101-residue stretch at 396-496 (KTTSLRTITS…RALVLQENDT (101 aa)) folds into the Ras-associating domain. Residues 498 to 545 (DILWDAFEIPELENFLRILGMEEKQYVFQTQQKYQQYRYHLDAELRQR) enclose the SARAH domain.

As to quaternary structure, interacts with rab-39 (GTP-bound form). Interacts (via SARAH domain) with cst-1; the interaction is required for the phosphorylation of cst-1. Expressed in the pharynx, epithelial cells, ciliated neurons in the head, body wall muscles, hypodermis, vulva, gonadal sheath cells, tail hypodermis and in coelomocytes. In terms of tissue distribution, expressed in the pharynx, neurons and vulva.

It is found in the cytoplasm. It localises to the cytoskeleton. Involved in embryonic morphogenesis. Plays a role in the organization of apical filamentous actin in epithelial cells of the developing embryo. May play a role in let-60-mediated vulval development. May induce nuclear condensation. Positively regulates the oxidative stress response, and this may be in association with the small GTPase rab-39. Not required for muscle integrity. The chain is Ras association domain-containing protein 1 homolog from Caenorhabditis elegans.